Reading from the N-terminus, the 33-residue chain is Phosphoglycerate kinase (33 aa).

Lysine 13 contacts AMP. Residue lysine 13 participates in ATP binding.

This sequence belongs to the phosphoglycerate kinase family. Monomer. Mg(2+) serves as cofactor.

The catalysed reaction is (2R)-3-phosphoglycerate + ATP = (2R)-3-phospho-glyceroyl phosphate + ADP. This is Phosphoglycerate kinase from Pseudotsuga menziesii (Douglas-fir).